Reading from the N-terminus, the 576-residue chain is Eukaryotic translation initiation factor 2A (576 aa).

WD repeat units lie at residues 71 to 119 (LPAA…LVFS), 266 to 307 (DREG…VSII), 308 to 349 (PPAP…KKIT), and 351 to 396 (VEAA…MFYE). 2 disordered regions span residues 422–461 (SASLPSPPTPHASASKLAAKPSVKPAGAYRPPGARGQNST) and 475–505 (GSANKHVNSSRQRVVPGATPVIDGNKKNNKK). Residues 475–486 (GSANKHVNSSRQ) are compositionally biased toward polar residues.

Belongs to the WD repeat EIF2A family.

The protein resides in the cytoplasm. Functionally, functions in the early steps of protein synthesis of a small number of specific mRNAs. Acts by directing the binding of methionyl-tRNAi to 40S ribosomal subunits. In contrast to the eIF-2 complex, it binds methionyl-tRNAi to 40S subunits in a codon-dependent manner, whereas the eIF-2 complex binds methionyl-tRNAi to 40S subunits in a GTP-dependent manner. The protein is Eukaryotic translation initiation factor 2A of Schizosaccharomyces pombe (strain 972 / ATCC 24843) (Fission yeast).